Here is a 492-residue protein sequence, read N- to C-terminus: Probable glycine dehydrogenase (decarboxylating) subunit 2 (492 aa).

Lysine 274 is subject to N6-(pyridoxal phosphate)lysine.

It belongs to the GcvP family. C-terminal subunit subfamily. As to quaternary structure, the glycine cleavage system is composed of four proteins: P, T, L and H. In this organism, the P 'protein' is a heterodimer of two subunits. The cofactor is pyridoxal 5'-phosphate.

It carries out the reaction N(6)-[(R)-lipoyl]-L-lysyl-[glycine-cleavage complex H protein] + glycine + H(+) = N(6)-[(R)-S(8)-aminomethyldihydrolipoyl]-L-lysyl-[glycine-cleavage complex H protein] + CO2. Its function is as follows. The glycine cleavage system catalyzes the degradation of glycine. The P protein binds the alpha-amino group of glycine through its pyridoxal phosphate cofactor; CO(2) is released and the remaining methylamine moiety is then transferred to the lipoamide cofactor of the H protein. This is Probable glycine dehydrogenase (decarboxylating) subunit 2 from Staphylococcus haemolyticus (strain JCSC1435).